The following is a 140-amino-acid chain: Coiled-coil domain-containing protein 126 (140 aa).

The N-terminal stretch at methionine 1–glutamine 35 is a signal peptide. Residue asparagine 110 is glycosylated (N-linked (GlcNAc...) asparagine). The segment covering asparagine 118–asparagine 130 has biased composition (low complexity). Positions asparagine 118 to arginine 140 are disordered. Residues lysine 131–arginine 140 are compositionally biased toward polar residues.

The protein resides in the secreted. The sequence is that of Coiled-coil domain-containing protein 126 (Ccdc126) from Mus musculus (Mouse).